Here is a 168-residue protein sequence, read N- to C-terminus: Crossover junction endodeoxyribonuclease RuvC (168 aa).

Residues Asp-7, Glu-66, and Asp-138 contribute to the active site. Mg(2+)-binding residues include Asp-7, Glu-66, and Asp-138.

This sequence belongs to the RuvC family. As to quaternary structure, homodimer which binds Holliday junction (HJ) DNA. The HJ becomes 2-fold symmetrical on binding to RuvC with unstacked arms; it has a different conformation from HJ DNA in complex with RuvA. In the full resolvosome a probable DNA-RuvA(4)-RuvB(12)-RuvC(2) complex forms which resolves the HJ. The cofactor is Mg(2+).

It is found in the cytoplasm. It catalyses the reaction Endonucleolytic cleavage at a junction such as a reciprocal single-stranded crossover between two homologous DNA duplexes (Holliday junction).. Its function is as follows. The RuvA-RuvB-RuvC complex processes Holliday junction (HJ) DNA during genetic recombination and DNA repair. Endonuclease that resolves HJ intermediates. Cleaves cruciform DNA by making single-stranded nicks across the HJ at symmetrical positions within the homologous arms, yielding a 5'-phosphate and a 3'-hydroxyl group; requires a central core of homology in the junction. The consensus cleavage sequence is 5'-(A/T)TT(C/G)-3'. Cleavage occurs on the 3'-side of the TT dinucleotide at the point of strand exchange. HJ branch migration catalyzed by RuvA-RuvB allows RuvC to scan DNA until it finds its consensus sequence, where it cleaves and resolves the cruciform DNA. In Cereibacter sphaeroides (strain ATCC 17029 / ATH 2.4.9) (Rhodobacter sphaeroides), this protein is Crossover junction endodeoxyribonuclease RuvC.